Here is a 723-residue protein sequence, read N- to C-terminus: Tryptophan 2-monooxygenase (723 aa).

The FMN site is built by S218, E238, R246, and R266. R266 contacts substrate.

This sequence belongs to the tryptophan 2-monooxygenase family. FMN is required as a cofactor.

It carries out the reaction L-tryptophan + O2 = indole-3-acetamide + CO2 + H2O. It participates in plant hormone metabolism; auxin biosynthesis. The polypeptide is Tryptophan 2-monooxygenase (iaaM) (Allorhizobium ampelinum (strain ATCC BAA-846 / DSM 112012 / S4) (Agrobacterium vitis (strain S4))).